Here is a 338-residue protein sequence, read N- to C-terminus: Beta-ketoacyl-[acyl-carrier-protein] synthase III 2 (338 aa).

Catalysis depends on residues Cys119 and His255. An ACP-binding region spans residues 256-260; sequence QANIR. The active site involves Asn285.

It belongs to the thiolase-like superfamily. FabH family. Homodimer.

It is found in the cytoplasm. The enzyme catalyses malonyl-[ACP] + acetyl-CoA + H(+) = 3-oxobutanoyl-[ACP] + CO2 + CoA. Its pathway is lipid metabolism; fatty acid biosynthesis. Catalyzes the condensation reaction of fatty acid synthesis by the addition to an acyl acceptor of two carbons from malonyl-ACP. Catalyzes the first condensation reaction which initiates fatty acid synthesis and may therefore play a role in governing the total rate of fatty acid production. Possesses both acetoacetyl-ACP synthase and acetyl transacylase activities. Its substrate specificity determines the biosynthesis of branched-chain and/or straight-chain of fatty acids. In Deinococcus radiodurans (strain ATCC 13939 / DSM 20539 / JCM 16871 / CCUG 27074 / LMG 4051 / NBRC 15346 / NCIMB 9279 / VKM B-1422 / R1), this protein is Beta-ketoacyl-[acyl-carrier-protein] synthase III 2.